We begin with the raw amino-acid sequence, 355 residues long: Elongation factor Ts (355 aa).

The segment at 82-85 is involved in Mg(2+) ion dislocation from EF-Tu; it reads TDFV.

It belongs to the EF-Ts family.

The protein resides in the cytoplasm. In terms of biological role, associates with the EF-Tu.GDP complex and induces the exchange of GDP to GTP. It remains bound to the aminoacyl-tRNA.EF-Tu.GTP complex up to the GTP hydrolysis stage on the ribosome. In Helicobacter acinonychis (strain Sheeba), this protein is Elongation factor Ts.